Consider the following 164-residue polypeptide: uncharacterized protein (164 aa).

Residues 46–142 (GRSPEQKEHV…APDNSIYDTL (97 aa)) are disordered.

This is an uncharacterized protein from Caenorhabditis elegans.